A 450-amino-acid chain; its full sequence is tRNA modification GTPase MnmE (450 aa).

3 residues coordinate (6S)-5-formyl-5,6,7,8-tetrahydrofolate: R25, E83, and K122. A TrmE-type G domain is found at G218 to G377. A K(+)-binding site is contributed by N228. Residues N228 to S233, S247 to T253, and D272 to G275 contribute to the GTP site. S232 serves as a coordination point for Mg(2+). Residues S247, I249, and T252 each contribute to the K(+) site. T253 provides a ligand contact to Mg(2+). Position 450 (K450) interacts with (6S)-5-formyl-5,6,7,8-tetrahydrofolate.

This sequence belongs to the TRAFAC class TrmE-Era-EngA-EngB-Septin-like GTPase superfamily. TrmE GTPase family. As to quaternary structure, homodimer. Heterotetramer of two MnmE and two MnmG subunits. K(+) serves as cofactor.

The protein localises to the cytoplasm. Its function is as follows. Exhibits a very high intrinsic GTPase hydrolysis rate. Involved in the addition of a carboxymethylaminomethyl (cmnm) group at the wobble position (U34) of certain tRNAs, forming tRNA-cmnm(5)s(2)U34. The chain is tRNA modification GTPase MnmE from Sulfurovum sp. (strain NBC37-1).